We begin with the raw amino-acid sequence, 69 residues long: Large ribosomal subunit protein bL31 (69 aa).

C16, C18, C37, and C40 together coordinate Zn(2+).

This sequence belongs to the bacterial ribosomal protein bL31 family. Type A subfamily. Part of the 50S ribosomal subunit. Requires Zn(2+) as cofactor.

Functionally, binds the 23S rRNA. This chain is Large ribosomal subunit protein bL31, found in Buchnera aphidicola subsp. Baizongia pistaciae (strain Bp).